The following is an 887-amino-acid chain: Alanine--tRNA ligase (887 aa).

4 residues coordinate Zn(2+): His-581, His-585, Cys-683, and His-687.

Belongs to the class-II aminoacyl-tRNA synthetase family. Requires Zn(2+) as cofactor.

The protein resides in the cytoplasm. It catalyses the reaction tRNA(Ala) + L-alanine + ATP = L-alanyl-tRNA(Ala) + AMP + diphosphate. Catalyzes the attachment of alanine to tRNA(Ala) in a two-step reaction: alanine is first activated by ATP to form Ala-AMP and then transferred to the acceptor end of tRNA(Ala). Also edits incorrectly charged Ser-tRNA(Ala) and Gly-tRNA(Ala) via its editing domain. This Ehrlichia ruminantium (strain Gardel) protein is Alanine--tRNA ligase.